The following is a 71-amino-acid chain: MKKDLHPQYYSVAVKCETCKNEFTLKSTKKEFKIDVCSKCHPVYTGNRSQAKSTGMIEKFNRRLAKKDQQK.

It belongs to the bacterial ribosomal protein bL31 family. Type A subfamily. As to quaternary structure, part of the 50S ribosomal subunit.

Its function is as follows. Binds the 23S rRNA. This chain is Large ribosomal subunit protein bL31 (rpmE), found in Mycoplasmopsis synoviae (strain 53) (Mycoplasma synoviae).